The primary structure comprises 226 residues: Putative mitochondrial outer membrane protein porin 5 (226 aa).

Belongs to the eukaryotic mitochondrial porin (TC 1.B.8.1) family.

It localises to the mitochondrion outer membrane. Its function is as follows. Putative channel that allows diffusion of small hydrophilic molecules through membranes. This Arabidopsis thaliana (Mouse-ear cress) protein is Putative mitochondrial outer membrane protein porin 5 (VDAC5).